The sequence spans 59 residues: uncharacterized protein (59 aa).

The N-terminal stretch at 1-17 (MIASIWYAELGCASAIA) is a signal peptide.

This is an uncharacterized protein from Rickettsia prowazekii (strain Madrid E).